A 600-amino-acid chain; its full sequence is MLRTHLAGELRPDNIGDEVTLTGWVGRRRDHGGVIFIDLRDRSGVAQVVFRESEVAERAHDLRSEYCLKVTGVVEARPEGSENPNLASGGIEVNVSALEVLNEAAALPFQIDDPSTSGEVGEETRLKYRYLDLRRKTQGDALRLRSRVNQAARGVLAEHDFTEIETPTLTRSTPEGARDFLVPARLRPGTFYALPQSPQLFKQLLMVAGMERYYQIARCYRDEDFRADRQPEFTQLDVEMSFVDQEDVISLAEEILVAIWKEIGYEISTPIPRMTYADAMKYYGSDKPDLRFDIQITECTDFFKNTTFRVFQNEYVGAVVMEGGADQPRRQLDAWQEWAKQRGAKGLAYILVGEDGELSGPVAKNITDEERAGIAEHVGAKPGDCIFFAAGETKPSRALLGAARGEIANKLGLIKEGDWAFTWVVDAPLFEPAADATASGDVALGHSAWTAVHHAFTSPKPEYLDNFDENPGEALAYAYDIVCNGNEIGGGSIRIHQPDVQERVFKVMGITEEEAREKFGFLLDAFAFGAPPHGGIAFGWDRIVSLLGGFDSIRDVIAFPKSGGGVDPLTDAPGEISAAQRKESGIDFKPKKGPQGQKEK.

Residue glutamate 175 coordinates L-aspartate. The interval 199 to 202 is aspartate; that stretch reads QLFK. Residue arginine 221 coordinates L-aspartate. ATP-binding positions include 221–223 and glutamine 230; that span reads RDE. Residue histidine 453 coordinates L-aspartate. Glutamate 487 is a binding site for ATP. Arginine 494 contacts L-aspartate. 539 to 542 is a binding site for ATP; that stretch reads GWDR. A disordered region spans residues 578 to 600; it reads AAQRKESGIDFKPKKGPQGQKEK. Residues 580–590 show a composition bias toward basic and acidic residues; that stretch reads QRKESGIDFKP.

The protein belongs to the class-II aminoacyl-tRNA synthetase family. Type 1 subfamily. In terms of assembly, homodimer.

The protein localises to the cytoplasm. The catalysed reaction is tRNA(Asx) + L-aspartate + ATP = L-aspartyl-tRNA(Asx) + AMP + diphosphate. Its function is as follows. Aspartyl-tRNA synthetase with relaxed tRNA specificity since it is able to aspartylate not only its cognate tRNA(Asp) but also tRNA(Asn). Reaction proceeds in two steps: L-aspartate is first activated by ATP to form Asp-AMP and then transferred to the acceptor end of tRNA(Asp/Asn). This chain is Aspartate--tRNA(Asp/Asn) ligase, found in Corynebacterium jeikeium (strain K411).